Here is a 283-residue protein sequence, read N- to C-terminus: Undecaprenyl-diphosphatase (283 aa).

A run of 7 helical transmembrane segments spans residues 1–21 (MDIIQAIVLGIIQGLTEFLPI), 40–60 (GAAFTAIIQIGTLAAVLIYFY), 85–105 (SRMGWMISAGTIPIVVLGLLF), 117–137 (YIISGSLILLALVLMYAEYLV), 196–216 (FSFLLSLPAVFAAGVYQLLKV), 232–252 (VATVVSGVIGYASIAFLLDYL), and 258–278 (YLFIIYRILLGVFLLAMLSMG).

This sequence belongs to the UppP family.

The protein resides in the cell inner membrane. It catalyses the reaction di-trans,octa-cis-undecaprenyl diphosphate + H2O = di-trans,octa-cis-undecaprenyl phosphate + phosphate + H(+). Catalyzes the dephosphorylation of undecaprenyl diphosphate (UPP). Confers resistance to bacitracin. The protein is Undecaprenyl-diphosphatase of Chloroherpeton thalassium (strain ATCC 35110 / GB-78).